Consider the following 356-residue polypeptide: UDP-3-O-acylglucosamine N-acyltransferase (356 aa).

The active-site Proton acceptor is the His-251.

It belongs to the transferase hexapeptide repeat family. LpxD subfamily. Homotrimer.

The enzyme catalyses a UDP-3-O-[(3R)-3-hydroxyacyl]-alpha-D-glucosamine + a (3R)-hydroxyacyl-[ACP] = a UDP-2-N,3-O-bis[(3R)-3-hydroxyacyl]-alpha-D-glucosamine + holo-[ACP] + H(+). Its pathway is bacterial outer membrane biogenesis; LPS lipid A biosynthesis. Catalyzes the N-acylation of UDP-3-O-acylglucosamine using 3-hydroxyacyl-ACP as the acyl donor. Is involved in the biosynthesis of lipid A, a phosphorylated glycolipid that anchors the lipopolysaccharide to the outer membrane of the cell. This chain is UDP-3-O-acylglucosamine N-acyltransferase, found in Ralstonia nicotianae (strain ATCC BAA-1114 / GMI1000) (Ralstonia solanacearum).